We begin with the raw amino-acid sequence, 103 residues long: G0/G1 switch protein 2 (103 aa).

A disordered region spans residues Leu80 to Ser103.

Directly interacts with BCL2; this interaction prevents the formation of the anti-apoptotic BAX-BCL2 complex. Widely expressed with highest levels in peripheral blood, skeletal muscle and heart, followed by kidney and liver.

Its subcellular location is the mitochondrion. In terms of biological role, promotes apoptosis by binding to BCL2, hence preventing the formation of protective BCL2-BAX heterodimers. The protein is G0/G1 switch protein 2 (G0S2) of Homo sapiens (Human).